Consider the following 683-residue polypeptide: THO complex subunit 5 (683 aa).

The segment at 1 to 42 (MSSESSKKRKPKVIRSDGAPAEGKRNRSDTEQEGKYYSEEAE) is disordered. N-acetylserine is present on Ser2. The tract at residues 2–144 (SSESSKKRKP…YEVMHLQKEI (143 aa)) is interaction with CSF1R. Positions 2–199 (SSESSKKRKP…RLDWELEQRK (198 aa)) are interaction with THOC7. Residues Ser5 and Ser6 each carry the phosphoserine modification. Residues 7-10 (KKRK) carry the Nuclear localization signal motif. The segment covering 22–42 (EGKRNRSDTEQEGKYYSEEAE) has biased composition (basic and acidic residues). Positions 81-247 (AIEIEERRIQ…QASLPVQEYL (167 aa)) form a coiled coil. Lys153 is covalently cross-linked (Glycyl lysine isopeptide (Lys-Gly) (interchain with G-Cter in SUMO2)). Residue Tyr225 is modified to Phosphotyrosine; by SRC. The interval 247 to 683 (LFMPFDQAHK…NHPQGFFSHR (437 aa)) is tandem RWD domains. The disordered stretch occupies residues 301 to 336 (FKPPEDSQDDESDSDAEEEQTTKRRRPTLGVQLDDK). Residues 306-319 (DSQDDESDSDAEEE) show a composition bias toward acidic residues. 3 positions are modified to phosphoserine: Ser307, Ser312, and Ser314. At Thr328 the chain carries Phosphothreonine.

The protein belongs to the THOC5 family. As to quaternary structure, component of the THO subcomplex, which is composed of THOC1, THOC2, THOC3, THOC5, THOC6 and THOC7. The THO subcomplex interacts with DDX39B to form the THO-DDX39B complex which multimerizes into a 28-subunit tetrameric assembly. Component of the transcription/export (TREX) complex at least composed of ALYREF/THOC4, DDX39B, SARNP/CIP29, CHTOP and the THO subcomplex; in the complex interacts with THOC1, THOC2, THOC5, THOC6 and THOC7; forms a coiled-coil dimer with THOC7; together with THOC6 and THOC7, plays a key structural role in oligomerization of the THO-DDX39B complex. TREX seems to have a dynamic structure involving ATP-dependent remodeling. Interacts with phosphorylated CSF1R. Interacts (via N-terminus) with the NTF2 domain of NXF1. Forms a complex with CEBPB. Interacts with CPSF6; indicative for an association with the cleavage factor Im (CFIm) complex. Interacts with LUZP4. Interacts with NCBP3. Post-translationally, phosphorylated on tyrosine upon binding to activated CSF1R; which causes a dissociation of the two proteins. Phosphorylation on Ser-5 and/or Ser-6 is required for nuclear export. Phosphorylated on Thr-328 in insulin-stimulated adipocytes. Phosphorylation at Tyr-225 modulates mRNA binding. As to expression, ubiquitously expressed.

It localises to the nucleus. The protein resides in the cytoplasm. Component of the THO subcomplex of the TREX complex which is thought to couple mRNA transcription, processing and nuclear export, and which specifically associates with spliced mRNA and not with unspliced pre-mRNA. Plays a key structural role in the oligomerization of the THO-DDX39B complex. TREX is recruited to spliced mRNAs by a transcription-independent mechanism, binds to mRNA upstream of the exon-junction complex (EJC) and is recruited in a splicing- and cap-dependent manner to a region near the 5' end of the mRNA where it functions in mRNA export to the cytoplasm via the TAP/NXF1 pathway. THOC5 in conjunction with ALYREF/THOC4 functions in NXF1-NXT1 mediated nuclear export of HSP70 mRNA; both proteins enhance the RNA binding activity of NXF1 and are required for NXF1 localization to the nuclear rim. Involved in transcription elongation and genome stability. Involved in alternative polyadenylation site choice by recruiting CPSF6 to 5' region of target genes; probably mediates association of the TREX and CFIm complexes. In terms of biological role, regulates the expression of myeloid transcription factors CEBPA, CEBPB and GAB2 by enhancing the levels of phosphatidylinositol 3,4,5-trisphosphate. May be involved in the differentiation of granulocytes and adipocytes. Essential for hematopoietic primitive cell survival and plays an integral role in monocytic development. Functionally, (Microbial infection) The TREX complex is essential for the export of Kaposi's sarcoma-associated herpesvirus (KSHV) intronless mRNAs and infectious virus production. This Homo sapiens (Human) protein is THO complex subunit 5 (THOC5).